Consider the following 307-residue polypeptide: 3-ketodihydrosphingosine reductase TSC10 (307 aa).

Position 11 (L11) interacts with NADP(+). 3 residues coordinate NADPH: G14, S16, and G18. The GXSXG motif lies at G14–G18. Residue L19 participates in NADP(+) binding. 3 residues coordinate NADPH: R40, K44, and L74. The active-site Proton donor is the S147. Residues Y161, K165, and S194 each contribute to the NADP(+) site. The Proton acceptor role is filled by Y161. K165 serves as the catalytic Lowers pKa of active site Tyr. A helical transmembrane segment spans residues Y261–I281.

It belongs to the short-chain dehydrogenases/reductases (SDR) family.

The protein localises to the endoplasmic reticulum membrane. The catalysed reaction is sphinganine + NADP(+) = 3-oxosphinganine + NADPH + H(+). It participates in lipid metabolism; sphingolipid metabolism. Catalyzes the reduction of 3'-oxosphinganine (3-ketodihydrosphingosine/KDS) to sphinganine (dihydrosphingosine/DHS), the second step of de novo sphingolipid biosynthesis. The chain is 3-ketodihydrosphingosine reductase TSC10 (TSC10) from Eremothecium gossypii (strain ATCC 10895 / CBS 109.51 / FGSC 9923 / NRRL Y-1056) (Yeast).